A 300-amino-acid polypeptide reads, in one-letter code: Ribosomal protein L11 methyltransferase (300 aa).

T144, G165, D187, and N235 together coordinate S-adenosyl-L-methionine.

Belongs to the methyltransferase superfamily. PrmA family.

Its subcellular location is the cytoplasm. It carries out the reaction L-lysyl-[protein] + 3 S-adenosyl-L-methionine = N(6),N(6),N(6)-trimethyl-L-lysyl-[protein] + 3 S-adenosyl-L-homocysteine + 3 H(+). Methylates ribosomal protein L11. This is Ribosomal protein L11 methyltransferase from Prochlorococcus marinus (strain MIT 9515).